The following is a 355-amino-acid chain: MSSTQFDGDIDSFVSYLKSNRGLSANTLKAYRADLTACLHLFELRGVTDLNEITLDDLRSWMAVESRDHARSSMARKTVAVRGFFAWAYEHGLTTTDPAATLMTPSIPSTLPAVLTESQAEQLLDVAEHAVATNQYKDDGGAAAAPGSGKAAGKTADKSADTVNRSEAPARADKRDNARVTAESQRNAAILELLYATGIRVAELVSMDIADIDFSNRTIKVTGKGNKQRVVPFGLPAQRALETWLEQGRPVLARTATDAVKSRAANALFLGARGGRIDQRIARDIVHRAAREAGVPDISPHALRHSAATHMLDGGADLREVQEMLGHSSLKTTQRYTHVSIEQLKNRYGQAFPRA.

A Core-binding (CB) domain is found at 4-89 (TQFDGDIDSF…AVRGFFAWAY (86 aa)). Residues 137 to 181 (KDDGGAAAAPGSGKAAGKTADKSADTVNRSEAPARADKRDNARVT) are disordered. Residues 141-154 (GAAAAPGSGKAAGK) show a composition bias toward low complexity. The Tyr recombinase domain occupies 158–349 (KSADTVNRSE…SIEQLKNRYG (192 aa)). Positions 168–178 (APARADKRDNA) are enriched in basic and acidic residues. Catalysis depends on residues arginine 200, lysine 224, histidine 301, arginine 304, and histidine 327. The active-site O-(3'-phospho-DNA)-tyrosine intermediate is the tyrosine 336.

The protein belongs to the 'phage' integrase family. XerC subfamily. In terms of assembly, forms a cyclic heterotetrameric complex composed of two molecules of XerC and two molecules of XerD.

It is found in the cytoplasm. Functionally, site-specific tyrosine recombinase, which acts by catalyzing the cutting and rejoining of the recombining DNA molecules. The XerC-XerD complex is essential to convert dimers of the bacterial chromosome into monomers to permit their segregation at cell division. It also contributes to the segregational stability of plasmids. In Bifidobacterium longum (strain DJO10A), this protein is Tyrosine recombinase XerC.